A 360-amino-acid polypeptide reads, in one-letter code: Arginase, non-hepatic 2 (360 aa).

Residues H122, D145, H147, and D149 each contribute to the Mn(2+) site. Residues H147–N151, S158–N160, and D204 contribute to the substrate site. Mn(2+) contacts are provided by D253 and D255. Substrate-binding residues include T267 and E298.

The protein belongs to the arginase family. In terms of assembly, homotrimer. Requires Mn(2+) as cofactor. As to expression, expressed at differing tadpole stages in tail, intestine, hindlimb and trunk region. Strongest in tadpole tail.

It catalyses the reaction L-arginine + H2O = urea + L-ornithine. It participates in nitrogen metabolism; urea cycle; L-ornithine and urea from L-arginine: step 1/1. Functionally, as well as its role in the urea cycle, may be involved in tissue remodeling. The polypeptide is Arginase, non-hepatic 2 (arg2-b) (Xenopus laevis (African clawed frog)).